A 348-amino-acid polypeptide reads, in one-letter code: Ileal sodium/bile acid cotransporter (348 aa).

The Extracellular portion of the chain corresponds to 1–28 (MDNSSVCPPNATVCEGDSCVVPESNFNA). N-linked (GlcNAc...) asparagine glycosylation is found at asparagine 3 and asparagine 10. The chain crosses the membrane as a helical span at residues 29-49 (ILNTVMSTVLTILLAMVMFSM). The Cytoplasmic segment spans residues 50–87 (GCNVEVHKFLGHIKRPWGIFVGFLCQFGIMPLTGFILS). Residues 88-108 (VASGILPVQAVVVLIMGCCPG) form a helical membrane-spanning segment. Over 109-126 (GTGSNILAYWIDGDMDLS) the chain is Extracellular. Residues 127-147 (VSMTTCSTLLALGMMPLCLFV) traverse the membrane as a helical segment. The Cytoplasmic segment spans residues 148 to 157 (YTKMWVDSGT). The chain crosses the membrane as a helical span at residues 158–178 (IVIPYDSIGISLVALVIPVSF). Residues 179-195 (GMFVNHKWPQKAKIILK) are Extracellular-facing. A helical transmembrane segment spans residues 196 to 216 (IGSITGVILIVLIAVIGGILY). Topologically, residues 217–224 (QSAWIIEP) are cytoplasmic. Residues 225-245 (KLWIIGTIFPIAGYSLGFFLA) traverse the membrane as a helical segment. The Extracellular portion of the chain corresponds to 246 to 284 (RLAGQPWYRCRTVALETGMQNTQLCSTIVQLSFSPEDLN). Residues 285–305 (LVFTFPLIYTVFQLVFAAVIL) traverse the membrane as a helical segment. The Cytoplasmic portion of the chain corresponds to 306–348 (GIYVTYRKCYGKNDAEFLEKTDNEMDSRPSFDETNKGFQPDEK). A disordered region spans residues 328–348 (NEMDSRPSFDETNKGFQPDEK). Residue serine 335 is modified to Phosphoserine.

This sequence belongs to the bile acid:sodium symporter (BASS) (TC 2.A.28) family. In terms of assembly, monomer and homodimer. Expressed in ileum.

The protein resides in the membrane. It catalyses the reaction taurocholate(out) + 2 Na(+)(out) = taurocholate(in) + 2 Na(+)(in). The enzyme catalyses cholate(out) + 2 Na(+)(out) = cholate(in) + 2 Na(+)(in). The catalysed reaction is taurochenodeoxycholate(out) + 2 Na(+)(out) = taurochenodeoxycholate(in) + 2 Na(+)(in). It carries out the reaction tauroursodeoxycholate(out) + 2 Na(+)(out) = tauroursodeoxycholate(in) + 2 Na(+)(in). It catalyses the reaction glycocholate(out) + 2 Na(+)(out) = glycocholate(in) + 2 Na(+)(in). The enzyme catalyses tauronorcholate(out) + 2 Na(+)(out) = tauronorcholate(in) + 2 Na(+)(in). The catalysed reaction is tauroallocholate(out) + 2 Na(+)(out) = tauroallocholate(in) + 2 Na(+)(in). It carries out the reaction taurodeoxycholate(out) + 2 Na(+)(out) = taurodeoxycholate(in) + 2 Na(+)(in). It catalyses the reaction tauro-beta-muricholate(out) + 2 Na(+)(out) = tauro-beta-muricholate(in) + 2 Na(+)(in). In terms of biological role, plays a critical role in the sodium-dependent reabsorption of bile acids from the lumen of the small intestine. Transports various bile acids, unconjugated or conjugated, such as cholate and taurocholate. Also responsible for bile acid transport in the renal proximal tubules, a salvage mechanism that helps conserve bile acids. Works collaboratively with the Na(+)-taurocholate cotransporting polypeptide (NTCP), the organic solute transporter (OST), and the bile salt export pump (BSEP), to ensure efficacious biological recycling of bile acids during enterohepatic circulation. The polypeptide is Ileal sodium/bile acid cotransporter (Slc10a2) (Mus musculus (Mouse)).